Consider the following 545-residue polypeptide: Chaperonin GroEL (545 aa).

ATP-binding positions include 30-33 (TLGP), lysine 51, 87-91 (DGTTT), glycine 415, and aspartate 495.

This sequence belongs to the chaperonin (HSP60) family. In terms of assembly, forms a cylinder of 14 subunits composed of two heptameric rings stacked back-to-back. Interacts with the co-chaperonin GroES.

It is found in the cytoplasm. It carries out the reaction ATP + H2O + a folded polypeptide = ADP + phosphate + an unfolded polypeptide.. Functionally, together with its co-chaperonin GroES, plays an essential role in assisting protein folding. The GroEL-GroES system forms a nano-cage that allows encapsulation of the non-native substrate proteins and provides a physical environment optimized to promote and accelerate protein folding. The protein is Chaperonin GroEL of Shewanella sp. (strain MR-7).